We begin with the raw amino-acid sequence, 182 residues long: LIM domain-containing protein C (182 aa).

LIM zinc-binding domains lie at 3-63 (SICP…LFRQ) and 110-170 (TNCP…KFGP).

The protein localises to the cell projection. Its subcellular location is the pseudopodium. It is found in the cytoplasm. The protein resides in the cell cortex. It localises to the cytoskeleton. Functionally, binds to F-actin and may modulate the chemotactic response during early development and contribute to the maintenance of the strength of the actin cytoskeleton. In Dictyostelium discoideum (Social amoeba), this protein is LIM domain-containing protein C (limC).